The chain runs to 256 residues: Hydroxyacylglutathione hydrolase (256 aa).

The Zn(2+) site is built by His53, His55, Asp57, His58, His111, Asp128, and His166.

It belongs to the metallo-beta-lactamase superfamily. Glyoxalase II family. As to quaternary structure, monomer. Requires Zn(2+) as cofactor.

It carries out the reaction an S-(2-hydroxyacyl)glutathione + H2O = a 2-hydroxy carboxylate + glutathione + H(+). The protein operates within secondary metabolite metabolism; methylglyoxal degradation; (R)-lactate from methylglyoxal: step 2/2. Functionally, thiolesterase that catalyzes the hydrolysis of S-D-lactoyl-glutathione to form glutathione and D-lactic acid. The chain is Hydroxyacylglutathione hydrolase from Thiobacillus denitrificans (strain ATCC 25259 / T1).